The following is a 228-amino-acid chain: Max-interacting protein 1 (228 aa).

Disordered stretches follow at residues 30 to 76 (YASS…NELE) and 160 to 228 (SIGS…SFAS). The span at 43–56 (QHSKPPRRLSRAQK) shows a compositional bias: basic residues. A compositionally biased stretch (polar residues) spans 57 to 70 (HSSGSSNTSTANRS). In terms of domain architecture, bHLH spans 67–119 (ANRSTHNELEKNRRAHLRLCLERLKVLIPLGPDCTRHTTLGLLNKAKAHIKKL). The span at 173–183 (EREEIEVDVES) shows a compositional bias: acidic residues. Residues 207-228 (SLQSVGSDEGYSSASVKLSFAS) are compositionally biased toward polar residues.

In terms of assembly, efficient DNA binding requires dimerization with another bHLH protein. Binds DNA as a heterodimer with MAX. Interacts with SMC3. Interacts with RNF17.

The protein localises to the nucleus. Its function is as follows. Transcriptional repressor. MXI1 binds with MAX to form a sequence-specific DNA-binding protein complex which recognizes the core sequence 5'-CAC[GA]TG-3'. MXI1 thus antagonizes MYC transcriptional activity by competing for MAX. Isoform Short, which lacks a segment, has a much stronger suppressive potential and associates with a SIN3 homologous protein. This is Max-interacting protein 1 (Mxi1) from Mus musculus (Mouse).